Reading from the N-terminus, the 428-residue chain is Enolase (428 aa).

Gln-163 serves as a coordination point for (2R)-2-phosphoglycerate. The active-site Proton donor is the Glu-205. The Mg(2+) site is built by Asp-242, Glu-284, and Asp-311. Positions 336, 365, 366, and 387 each coordinate (2R)-2-phosphoglycerate. The active-site Proton acceptor is Lys-336.

It belongs to the enolase family. It depends on Mg(2+) as a cofactor.

It localises to the cytoplasm. The protein resides in the secreted. Its subcellular location is the cell surface. It carries out the reaction (2R)-2-phosphoglycerate = phosphoenolpyruvate + H2O. It functions in the pathway carbohydrate degradation; glycolysis; pyruvate from D-glyceraldehyde 3-phosphate: step 4/5. Its function is as follows. Catalyzes the reversible conversion of 2-phosphoglycerate (2-PG) into phosphoenolpyruvate (PEP). It is essential for the degradation of carbohydrates via glycolysis. This chain is Enolase, found in Tropheryma whipplei (strain TW08/27) (Whipple's bacillus).